A 244-amino-acid polypeptide reads, in one-letter code: tRNA pseudouridine synthase A (244 aa).

D52 serves as the catalytic Nucleophile. Y111 is a substrate binding site.

The protein belongs to the tRNA pseudouridine synthase TruA family. As to quaternary structure, homodimer.

The enzyme catalyses uridine(38/39/40) in tRNA = pseudouridine(38/39/40) in tRNA. In terms of biological role, formation of pseudouridine at positions 38, 39 and 40 in the anticodon stem and loop of transfer RNAs. This is tRNA pseudouridine synthase A from Thermosipho africanus (strain TCF52B).